The primary structure comprises 395 residues: Argininosuccinate synthase (395 aa).

Position 8–16 (8–16 (AYSGGLDTS)) interacts with ATP. Y86 serves as a coordination point for L-citrulline. ATP is bound at residue G116. T118, N122, and D123 together coordinate L-aspartate. L-citrulline is bound at residue N122. The L-citrulline site is built by R126, S173, S182, E257, and Y269.

This sequence belongs to the argininosuccinate synthase family. Type 1 subfamily. As to quaternary structure, homotetramer.

It localises to the cytoplasm. It carries out the reaction L-citrulline + L-aspartate + ATP = 2-(N(omega)-L-arginino)succinate + AMP + diphosphate + H(+). The protein operates within amino-acid biosynthesis; L-arginine biosynthesis; L-arginine from L-ornithine and carbamoyl phosphate: step 2/3. This Methanocaldococcus jannaschii (strain ATCC 43067 / DSM 2661 / JAL-1 / JCM 10045 / NBRC 100440) (Methanococcus jannaschii) protein is Argininosuccinate synthase.